We begin with the raw amino-acid sequence, 456 residues long: Bifunctional protein GlmU (456 aa).

The interval Met1 to Arg229 is pyrophosphorylase. UDP-N-acetyl-alpha-D-glucosamine contacts are provided by residues Leu7–Gly10, Lys21, Gln73, Gly78–Thr79, Tyr103–Asp105, Gly139, Glu154, Asn169, and Asn227. Mg(2+) is bound at residue Asp105. Asn227 provides a ligand contact to Mg(2+). The interval Val230–Ala250 is linker. The segment at Gly251–Ser456 is N-acetyltransferase. Residues Arg333 and Lys351 each coordinate UDP-N-acetyl-alpha-D-glucosamine. His363 serves as the catalytic Proton acceptor. Residues Tyr366 and Asn377 each contribute to the UDP-N-acetyl-alpha-D-glucosamine site. Residues Ala380, Asn386–Tyr387, Ser405, Ala423, and Arg440 contribute to the acetyl-CoA site.

The protein in the N-terminal section; belongs to the N-acetylglucosamine-1-phosphate uridyltransferase family. This sequence in the C-terminal section; belongs to the transferase hexapeptide repeat family. As to quaternary structure, homotrimer. Requires Mg(2+) as cofactor.

Its subcellular location is the cytoplasm. It catalyses the reaction alpha-D-glucosamine 1-phosphate + acetyl-CoA = N-acetyl-alpha-D-glucosamine 1-phosphate + CoA + H(+). The enzyme catalyses N-acetyl-alpha-D-glucosamine 1-phosphate + UTP + H(+) = UDP-N-acetyl-alpha-D-glucosamine + diphosphate. It functions in the pathway nucleotide-sugar biosynthesis; UDP-N-acetyl-alpha-D-glucosamine biosynthesis; N-acetyl-alpha-D-glucosamine 1-phosphate from alpha-D-glucosamine 6-phosphate (route II): step 2/2. Its pathway is nucleotide-sugar biosynthesis; UDP-N-acetyl-alpha-D-glucosamine biosynthesis; UDP-N-acetyl-alpha-D-glucosamine from N-acetyl-alpha-D-glucosamine 1-phosphate: step 1/1. The protein operates within bacterial outer membrane biogenesis; LPS lipid A biosynthesis. Its function is as follows. Catalyzes the last two sequential reactions in the de novo biosynthetic pathway for UDP-N-acetylglucosamine (UDP-GlcNAc). The C-terminal domain catalyzes the transfer of acetyl group from acetyl coenzyme A to glucosamine-1-phosphate (GlcN-1-P) to produce N-acetylglucosamine-1-phosphate (GlcNAc-1-P), which is converted into UDP-GlcNAc by the transfer of uridine 5-monophosphate (from uridine 5-triphosphate), a reaction catalyzed by the N-terminal domain. In Bordetella petrii (strain ATCC BAA-461 / DSM 12804 / CCUG 43448), this protein is Bifunctional protein GlmU.